The chain runs to 245 residues: 1-(5-phosphoribosyl)-5-[(5-phosphoribosylamino)methylideneamino] imidazole-4-carboxamide isomerase (245 aa).

Catalysis depends on Asp-8, which acts as the Proton acceptor. Asp-130 (proton donor) is an active-site residue.

The protein belongs to the HisA/HisF family.

It is found in the cytoplasm. The catalysed reaction is 1-(5-phospho-beta-D-ribosyl)-5-[(5-phospho-beta-D-ribosylamino)methylideneamino]imidazole-4-carboxamide = 5-[(5-phospho-1-deoxy-D-ribulos-1-ylimino)methylamino]-1-(5-phospho-beta-D-ribosyl)imidazole-4-carboxamide. It functions in the pathway amino-acid biosynthesis; L-histidine biosynthesis; L-histidine from 5-phospho-alpha-D-ribose 1-diphosphate: step 4/9. The chain is 1-(5-phosphoribosyl)-5-[(5-phosphoribosylamino)methylideneamino] imidazole-4-carboxamide isomerase from Pseudomonas aeruginosa (strain LESB58).